A 305-amino-acid chain; its full sequence is MLVIHFKPYNNLKMSFTSTENKHLLGVYEKAINNKFAWKDKIAIAKQASFDFIELSIDESDARLQRLDWSDTEINQLHNELQAQTFCLNSMCLSAHRRFPLGSKNKTTVQQGLTIFEKACVLARKLGIRIIQLAAYDVYYEPHDTETERNFITNMRKVAELAQKYAVTIAFEVMDTPFAGTIVRCLNLIKRIGKANILLYPDIGNLSQFSTAVFDEIALGQDKIVGFHFKDTLPKQFKEVPFGTGTAQFEAALKAIHQYVPTVPILIEMWSKNDPAESTVQNVAQLKQAKQFYEQQWDLALKRVK.

It belongs to the L-ribulose-5-phosphate 3-epimerase family.

The catalysed reaction is L-ribulose 5-phosphate = L-xylulose 5-phosphate. It functions in the pathway cofactor degradation; L-ascorbate degradation; D-xylulose 5-phosphate from L-ascorbate: step 3/4. Catalyzes the isomerization of L-xylulose-5-phosphate to L-ribulose-5-phosphate. Is involved in the anaerobic L-ascorbate utilization. In Mycoplasma pneumoniae (strain ATCC 29342 / M129 / Subtype 1) (Mycoplasmoides pneumoniae), this protein is Probable L-ribulose-5-phosphate 3-epimerase UlaE (ulaE).